Here is a 255-residue protein sequence, read N- to C-terminus: Pre-miRNA 5'-monophosphate methyltransferase (255 aa).

S-adenosyl-L-methionine contacts are provided by residues Arg-32, Asn-66, Asp-96, 121–122, and Met-150; that span reads DI. The 213-residue stretch at 41–253 folds into the Bin3-type SAM domain; sequence LHKLFRKPAE…SLLLFKIQRH (213 aa).

The protein belongs to the methyltransferase superfamily.

The protein localises to the cytoplasm. The catalysed reaction is a 5'-end 5'-phospho-ribonucleoside-RNA + S-adenosyl-L-methionine = a 5'-end (5'-methylphospho)-ribonucleoside-RNA + S-adenosyl-L-homocysteine. It carries out the reaction a 5'-end 5'-phospho-ribonucleoside-RNA + 2 S-adenosyl-L-methionine = a 5'-end (5'-bismethylphospho)-ribonucleoside-RNA + 2 S-adenosyl-L-homocysteine. O-methyltransferase that specifically monomethylates 5'-monophosphate of cytoplasmic histidyl tRNA (tRNA(His)), acting as a capping enzyme by protecting tRNA(His) from cleavage by DICER1. Also able, with less efficiently, to methylate the 5' monophosphate of a subset of pre-miRNAs, acting as a negative regulator of miRNA processing. The 5' monophosphate of pre-miRNAs is recognized by DICER1 and is required for pre-miRNAs processing: methylation at this position reduces the processing of pre-miRNAs by DICER1. Was also reported to mediate dimethylation of pre-miR-145; however dimethylation cannot be reproduced by another group which observes a monomethylation of pre-miR-145. This Xenopus laevis (African clawed frog) protein is Pre-miRNA 5'-monophosphate methyltransferase (bcdin3d).